The primary structure comprises 814 residues: Protein kintoun (814 aa).

Residues 234-246 (AANTARSPASPAP) show a composition bias toward low complexity. Disordered regions lie at residues 234-259 (AANT…EPRC) and 357-490 (ARQE…MGDP). Residues 388-404 (AAREESADGTGADHGEK) show a composition bias toward basic and acidic residues. Phosphoserine occurs at positions 444 and 618. Positions 654–686 (AGLQGKGKGVREGCPLSEAEAADQSATSPAASD) are disordered. Over residues 675-686 (ADQSATSPAASD) the composition is skewed to low complexity.

Belongs to the PIH1 family. Kintoun subfamily. Interacts with DNAI2 and HSPA1A. Interacts with CFAP300. Interacts with DNAAF4. Interacts with DNAAF6/PIH1D3. As to expression, expressed in nearly all organs of adult, with higher expression in tissues known to have motile cilia and flagella, such as brain and testis.

Its subcellular location is the cytoplasm. It localises to the dynein axonemal particle. In terms of biological role, required for cytoplasmic pre-assembly of axonemal dyneins, thereby playing a central role in motility in cilia and flagella. Involved in pre-assembly of dynein arm complexes in the cytoplasm before intraflagellar transport loads them for the ciliary compartment. This is Protein kintoun from Mus musculus (Mouse).